Reading from the N-terminus, the 436-residue chain is Ribosomal protein uS12 methylthiotransferase RimO (436 aa).

One can recognise an MTTase N-terminal domain in the interval 2-117 (KNVGIISLGC…IAEVIEKIEK (116 aa)). The [4Fe-4S] cluster site is built by cysteine 11, cysteine 47, cysteine 80, cysteine 154, cysteine 158, and cysteine 161. The region spanning 140-369 (TTPNYYAYLK…MEIQKEISYQ (230 aa)) is the Radical SAM core domain. One can recognise a TRAM domain in the interval 372-436 (LSKVGKQLEV…AYEYDLVGEY (65 aa)).

The protein belongs to the methylthiotransferase family. RimO subfamily. The cofactor is [4Fe-4S] cluster.

It is found in the cytoplasm. It carries out the reaction L-aspartate(89)-[ribosomal protein uS12]-hydrogen + (sulfur carrier)-SH + AH2 + 2 S-adenosyl-L-methionine = 3-methylsulfanyl-L-aspartate(89)-[ribosomal protein uS12]-hydrogen + (sulfur carrier)-H + 5'-deoxyadenosine + L-methionine + A + S-adenosyl-L-homocysteine + 2 H(+). Functionally, catalyzes the methylthiolation of an aspartic acid residue of ribosomal protein uS12. The protein is Ribosomal protein uS12 methylthiotransferase RimO of Thermoanaerobacter sp. (strain X514).